The sequence spans 63 residues: ORF6 protein (63 aa).

This sequence belongs to the coronaviruses accessory protein 6 family.

The protein resides in the host endoplasmic reticulum membrane. The protein localises to the host Golgi apparatus membrane. Its function is as follows. Could be a determinant of virus virulence. Seems to stimulate cellular DNA synthesis in vitro. In Rhinolophus macrotis (Big-eared horseshoe bat), this protein is ORF6 protein.